Consider the following 396-residue polypeptide: MALRTIDALDLAGKRVFIRVDFNVPLDPQGRVTDDARIRAALPTIRHAIQAKAKVILASHLGRPKGKPDDRQKLTLEPAAVRLSELLSQDVILADDCVGDGVKKLVRDLKDGHVLLLENLRFHPEEEKNDEAFARELASLADVWVNDAFGTAHRAHASTAGMARFVKEKAAGFLVQKEVEYLGKALGSPARPFVAIVGGAKVSDKIKVLENLIAKADAICVGGAMAYTFLKAQGVPVGKSLVEEDKLELARQILERAEARKVDLLLPVDHVCGAEPKETAERVVVNDRAIPDGLMGLDIGPKTLDRYRQRIAAAKTVFWNGPMGLFEQKPWSEGTFGVAKAMAASPAVTVVGGGDSAAAVEQAGIVDAMKHVSTGGGASLEFIEGRELPGVKACEE.

Substrate is bound by residues 21-23 (DFN), Arg37, 60-63 (HLGR), Arg121, and Arg154. ATP is bound by residues Lys205, Gly296, Glu327, and 353–356 (GGDS).

This sequence belongs to the phosphoglycerate kinase family. As to quaternary structure, monomer.

The protein localises to the cytoplasm. The catalysed reaction is (2R)-3-phosphoglycerate + ATP = (2R)-3-phospho-glyceroyl phosphate + ADP. It functions in the pathway carbohydrate degradation; glycolysis; pyruvate from D-glyceraldehyde 3-phosphate: step 2/5. The protein is Phosphoglycerate kinase of Anaeromyxobacter sp. (strain K).